Consider the following 1374-residue polypeptide: DNA-directed RNA polymerase subunit beta (1374 aa).

This sequence belongs to the RNA polymerase beta chain family. As to quaternary structure, the RNAP catalytic core consists of 2 alpha, 1 beta, 1 beta' and 1 omega subunit. When a sigma factor is associated with the core the holoenzyme is formed, which can initiate transcription.

The enzyme catalyses RNA(n) + a ribonucleoside 5'-triphosphate = RNA(n+1) + diphosphate. In terms of biological role, DNA-dependent RNA polymerase catalyzes the transcription of DNA into RNA using the four ribonucleoside triphosphates as substrates. The protein is DNA-directed RNA polymerase subunit beta of Acidovorax sp. (strain JS42).